A 604-amino-acid chain; its full sequence is Cell division cycle protein CDT1 (604 aa).

Belongs to the Cdt1 family. As to quaternary structure, associates with the MCM2-7 complex. Interacts with MCM2, ORC1, ORC2 and ORC6.

The protein resides in the cytoplasm. It localises to the nucleus. In terms of biological role, DNA replication licensing factor, required for pre-replication complex assembly. Faithful duplication of the genetic material requires 'once per cell cycle' DNA replication initiation and elongation. Central to this control is the tightly regulated formation of prereplicative complexes (preRCs) at future origins of DNA replication. Required for the recruitment of the MCM2-7 helicase complex to the replication origins. The sequence is that of Cell division cycle protein CDT1 (TAH11) from Saccharomyces cerevisiae (strain ATCC 204508 / S288c) (Baker's yeast).